Consider the following 145-residue polypeptide: MIIDITEIMDWIPHRYPFLLVDRVLKIDPNKSITGIKNVTVNEPQFTGHFPARPVMPGVLMVEAMAQLAAILVAKSLGSTKNKEVFLMTIENAKFRRIVQPGDTMHIHAVIDQQRANVWKFSSTVTVEGEIAAESKFTAMIKDKT.

H49 is an active-site residue.

It belongs to the thioester dehydratase family. FabZ subfamily.

It is found in the cytoplasm. It catalyses the reaction a (3R)-hydroxyacyl-[ACP] = a (2E)-enoyl-[ACP] + H2O. In terms of biological role, involved in unsaturated fatty acids biosynthesis. Catalyzes the dehydration of short chain beta-hydroxyacyl-ACPs and long chain saturated and unsaturated beta-hydroxyacyl-ACPs. The protein is 3-hydroxyacyl-[acyl-carrier-protein] dehydratase FabZ of Rickettsia peacockii (strain Rustic).